A 714-amino-acid polypeptide reads, in one-letter code: Putative glutamine--fructose-6-phosphate aminotransferase [isomerizing] (714 aa).

The Nucleophile; for GATase activity role is filled by cysteine 2. Residues cysteine 2–glycine 321 form the Glutamine amidotransferase type-2 domain. Residues serine 266 to proline 280 are compositionally biased toward polar residues. The interval serine 266–leucine 285 is disordered. SIS domains follow at residues tryptophan 387 to serine 526 and cysteine 559 to proline 704.

The catalysed reaction is D-fructose 6-phosphate + L-glutamine = D-glucosamine 6-phosphate + L-glutamate. It participates in nucleotide-sugar biosynthesis; UDP-N-acetyl-alpha-D-glucosamine biosynthesis; alpha-D-glucosamine 6-phosphate from D-fructose 6-phosphate: step 1/1. Involved in amino sugar synthesis (formation of chitin, supplies the amino sugars of asparagine-linked oligosaccharides of glycoproteins). The chain is Putative glutamine--fructose-6-phosphate aminotransferase [isomerizing] from Saccharomyces cerevisiae (strain YJM789) (Baker's yeast).